The following is a 332-amino-acid chain: uncharacterized protein (332 aa).

The interval 159–256 is disordered; that stretch reads PLEISGRGGN…PRPHPWGPGP (98 aa). Pro residues predominate over residues 201–231; that stretch reads RPPSPRPPSPRPPHPRPPSPRPPHPRPPSPR.

Its subcellular location is the virion. This is an uncharacterized protein from Acanthamoeba polyphaga (Amoeba).